The chain runs to 221 residues: Putative N-acetylmannosamine-6-phosphate 2-epimerase (221 aa).

It belongs to the NanE family.

The catalysed reaction is an N-acyl-D-glucosamine 6-phosphate = an N-acyl-D-mannosamine 6-phosphate. The protein operates within amino-sugar metabolism; N-acetylneuraminate degradation; D-fructose 6-phosphate from N-acetylneuraminate: step 3/5. Its function is as follows. Converts N-acetylmannosamine-6-phosphate (ManNAc-6-P) to N-acetylglucosamine-6-phosphate (GlcNAc-6-P). The chain is Putative N-acetylmannosamine-6-phosphate 2-epimerase from Clostridium perfringens (strain SM101 / Type A).